An 85-amino-acid chain; its full sequence is U4-theraphotoxin-Hhn1q (85 aa).

The first 22 residues, 1-22, serve as a signal peptide directing secretion; sequence MKVTLIAILTCAAVLVLHTTAA. A propeptide spanning residues 23-48 is cleaved from the precursor; it reads EELEAESQLMEVGMPDTELAAVDEER. Cystine bridges form between Cys-52–Cys-66, Cys-56–Cys-77, and Cys-71–Cys-82.

This sequence belongs to the neurotoxin 12 (Hwtx-2) family. 02 (Hwtx-2) subfamily. In terms of tissue distribution, expressed by the venom gland.

It localises to the secreted. Postsynaptic neurotoxin. In Cyriopagopus hainanus (Chinese bird spider), this protein is U4-theraphotoxin-Hhn1q.